The following is a 130-amino-acid chain: Small ribosomal subunit protein uS11c (130 aa).

It belongs to the universal ribosomal protein uS11 family. Part of the 30S ribosomal subunit.

It localises to the plastid. Its subcellular location is the chloroplast. The sequence is that of Small ribosomal subunit protein uS11c from Pinus koraiensis (Korean pine).